Consider the following 376-residue polypeptide: Spermidine/putrescine import ATP-binding protein PotA (376 aa).

Residues 6 to 236 (INIVNVNKSF…PADTFVADFL (231 aa)) form the ABC transporter domain. 38–45 (GPSGCGKT) is a binding site for ATP.

Belongs to the ABC transporter superfamily. Spermidine/putrescine importer (TC 3.A.1.11.1) family. As to quaternary structure, the complex is composed of two ATP-binding proteins (PotA), two transmembrane proteins (PotB and PotC) and a solute-binding protein (PotD).

The protein resides in the cell inner membrane. The enzyme catalyses ATP + H2O + polyamine-[polyamine-binding protein]Side 1 = ADP + phosphate + polyamineSide 2 + [polyamine-binding protein]Side 1.. In terms of biological role, part of the ABC transporter complex PotABCD involved in spermidine/putrescine import. Responsible for energy coupling to the transport system. This is Spermidine/putrescine import ATP-binding protein PotA from Fusobacterium nucleatum subsp. nucleatum (strain ATCC 25586 / DSM 15643 / BCRC 10681 / CIP 101130 / JCM 8532 / KCTC 2640 / LMG 13131 / VPI 4355).